The sequence spans 104 residues: Large ribosomal subunit protein bL21 (104 aa).

Belongs to the bacterial ribosomal protein bL21 family. In terms of assembly, part of the 50S ribosomal subunit. Contacts protein L20.

This protein binds to 23S rRNA in the presence of protein L20. The sequence is that of Large ribosomal subunit protein bL21 from Streptococcus pneumoniae serotype 2 (strain D39 / NCTC 7466).